The sequence spans 337 residues: RNA 3'-terminal phosphate cyclase (337 aa).

ATP is bound by residues Gln101 and 282–285; that span reads HMSD. His306 (tele-AMP-histidine intermediate) is an active-site residue.

It belongs to the RNA 3'-terminal cyclase family. Type 1 subfamily.

The protein localises to the cytoplasm. The enzyme catalyses a 3'-end 3'-phospho-ribonucleotide-RNA + ATP = a 3'-end 2',3'-cyclophospho-ribonucleotide-RNA + AMP + diphosphate. Its function is as follows. Catalyzes the conversion of 3'-phosphate to a 2',3'-cyclic phosphodiester at the end of RNA. The mechanism of action of the enzyme occurs in 3 steps: (A) adenylation of the enzyme by ATP; (B) transfer of adenylate to an RNA-N3'P to produce RNA-N3'PP5'A; (C) and attack of the adjacent 2'-hydroxyl on the 3'-phosphorus in the diester linkage to produce the cyclic end product. The biological role of this enzyme is unknown but it is likely to function in some aspects of cellular RNA processing. This is RNA 3'-terminal phosphate cyclase (rtcA) from Saccharolobus solfataricus (strain ATCC 35092 / DSM 1617 / JCM 11322 / P2) (Sulfolobus solfataricus).